We begin with the raw amino-acid sequence, 122 residues long: Large ribosomal subunit protein uL14c (122 aa).

This sequence belongs to the universal ribosomal protein uL14 family. As to quaternary structure, part of the 50S ribosomal subunit.

It localises to the plastid. It is found in the chloroplast. Functionally, binds to 23S rRNA. The polypeptide is Large ribosomal subunit protein uL14c (Staurastrum punctulatum (Green alga)).